Here is a 376-residue protein sequence, read N- to C-terminus: MAQDPADGVYFGLMSGTSMDGVDGVAVRFAQGKPSVVLAEAFVGFAAGLRDALFALQQPGDNEIEREALAANALATRYAVCCHDLLHNSRVPAAEVRAIGVHGQTVRHRPEKGYTRQINNPALLAEMMHIDVIADFRSRDVAAGGQGAPLVPAFHATVFGAKNETRVVCNLGGISNITILNATGSVRGFDCGPANALLDEWAQRHLGKPFDENGHFAAGGQVDRTLLNALLDEPFFGQQPPKSTGRDLFNADWLDAKLPPFAALDHADVQATLVALTAVTVAREIERHASDAKAVYVCGGGARNPEILKALQQALEDSGVSGVPVMTTDALGVPPSQVEPLAFAWLAMRCVARLPGNLPAVTGASAERVLGAIYPR.

16–23 (GTSMDGVD) is a binding site for ATP.

Belongs to the anhydro-N-acetylmuramic acid kinase family.

The catalysed reaction is 1,6-anhydro-N-acetyl-beta-muramate + ATP + H2O = N-acetyl-D-muramate 6-phosphate + ADP + H(+). It functions in the pathway amino-sugar metabolism; 1,6-anhydro-N-acetylmuramate degradation. It participates in cell wall biogenesis; peptidoglycan recycling. Its function is as follows. Catalyzes the specific phosphorylation of 1,6-anhydro-N-acetylmuramic acid (anhMurNAc) with the simultaneous cleavage of the 1,6-anhydro ring, generating MurNAc-6-P. Is required for the utilization of anhMurNAc either imported from the medium or derived from its own cell wall murein, and thus plays a role in cell wall recycling. This is Anhydro-N-acetylmuramic acid kinase from Paraburkholderia xenovorans (strain LB400).